We begin with the raw amino-acid sequence, 804 residues long: Ribonucleoside-diphosphate reductase large subunit (804 aa).

The region spanning 1–92 (MYVLNRKGEE…TDNLHKNTSD (92 aa)) is the ATP-cone domain. ATP is bound by residues 5-6 (NR), 11-17 (EDISFDQ), T53, and D57. S216 serves as a coordination point for GDP. Cysteines 217 and 442 form a disulfide. DTTP-binding positions include 225-227 (DSI), K242, R255, and 262-263 (RG). N425 is a binding site for GDP. N425 functions as the Proton acceptor in the catalytic mechanism. Residue C427 is the Cysteine radical intermediate of the active site. GDP is bound by residues E429 and 603-606 (TAST). Residue E429 is the Proton acceptor of the active site.

The protein belongs to the ribonucleoside diphosphate reductase large chain family. Heterodimer of a large and a small subunit.

It carries out the reaction a 2'-deoxyribonucleoside 5'-diphosphate + [thioredoxin]-disulfide + H2O = a ribonucleoside 5'-diphosphate + [thioredoxin]-dithiol. With respect to regulation, under complex allosteric control mediated by deoxynucleoside triphosphates and ATP binding to separate specificity and activation sites on the large subunit. The type of nucleotide bound at the specificity site determines substrate preference. It seems probable that ATP makes the enzyme reduce CDP and UDP, dGTP favors ADP reduction and dTTP favors GDP reduction. Stimulated by ATP and inhibited by dATP binding to the activity site. Its function is as follows. Provides the precursors necessary for DNA synthesis. Catalyzes the biosynthesis of deoxyribonucleotides from the corresponding ribonucleotides. The protein is Ribonucleoside-diphosphate reductase large subunit (RNR1) of Plasmodium falciparum (isolate FCR-3 / Gambia).